Here is an 88-residue protein sequence, read N- to C-terminus: MCFSPKIKTPKMDTNQIRAVEPAPLTQEVSSVEFGGSSDETDTEGTEVSGRKGLKVERDDSVAKSKASGNGSARMKSSIRKSAFGGKK.

The tract at residues 1–88 (MCFSPKIKTP…IRKSAFGGKK (88 aa)) is disordered. Basic and acidic residues predominate over residues 54 to 63 (LKVERDDSVA).

It localises to the virion. Plays a role in virion morphogenesis, and is ejected from the infecting particle into the bacterial cell. The protein is Protein 6.7 of Escherichia coli (Bacteriophage T7).